Here is a 155-residue protein sequence, read N- to C-terminus: Endoribonuclease YbeY (155 aa).

H114, H118, and H124 together coordinate Zn(2+).

This sequence belongs to the endoribonuclease YbeY family. It depends on Zn(2+) as a cofactor.

It localises to the cytoplasm. Functionally, single strand-specific metallo-endoribonuclease involved in late-stage 70S ribosome quality control and in maturation of the 3' terminus of the 16S rRNA. The polypeptide is Endoribonuclease YbeY (Escherichia coli O81 (strain ED1a)).